We begin with the raw amino-acid sequence, 187 residues long: Interferon beta (187 aa).

The signal sequence occupies residues 1–21; sequence MTNKCLLQIALLLCFSTTALS. Y24 carries the phosphotyrosine modification. A disulfide bridge connects residues C52 and C162. Residue N101 is glycosylated (N-linked (GlcNAc...) asparagine).

Belongs to the alpha/beta interferon family. Monomer.

Its subcellular location is the secreted. Its function is as follows. Type I interferon cytokine that plays a key role in the innate immune response to infection, developing tumors and other inflammatory stimuli. Signals via binding to high-affinity (IFNAR2) and low-affinity (IFNAR1) heterodimeric receptor, activating the canonical Jak-STAT signaling pathway resulting in transcriptional activation or repression of interferon-regulated genes that encode the effectors of the interferon response, such as antiviral proteins, regulators of cell proliferation and differentiation, and immunoregulatory proteins. Signals mostly via binding to a IFNAR1-IFNAR2 heterodimeric receptor, but can also function with IFNAR1 alone and independently of Jak-STAT pathways. Elicits a wide variety of responses, including antiviral and antibacterial activities, and can regulate the development of B-cells, myelopoiesis and lipopolysaccharide (LPS)-inducible production of tumor necrosis factor. Plays a role in neuronal homeostasis by regulating dopamine turnover and protecting dopaminergic neurons: acts by promoting neuronal autophagy and alpha-synuclein clearance, thereby preventing dopaminergic neuron loss. IFNB1 is more potent than interferon-alpha (IFN-alpha) in inducing the apoptotic and antiproliferative pathways required for control of tumor cell growth. The protein is Interferon beta of Homo sapiens (Human).